Reading from the N-terminus, the 761-residue chain is 52 kDa repressor of the inhibitor of the protein kinase (761 aa).

Residues 1–86 (MPNFCAAPNC…LRDNAIPTIF (86 aa)) form a THAP-type zinc finger. A compositionally biased stretch (basic and acidic residues) spans 116–132 (QKKIDETSEQEQKHKET). A disordered region spans residues 116 to 149 (QKKIDETSEQEQKHKETNNSNAQNPSEEEGEGQD). Phosphoserine is present on Ser-566.

As to quaternary structure, interacts with DNAJC3, probably sequestring it.

In terms of biological role, upstream regulator of interferon-induced serine/threonine protein kinase R (PKR). May block the PKR-inhibitory function of DNAJC3, resulting in restoration of kinase activity and suppression of cell growth. The sequence is that of 52 kDa repressor of the inhibitor of the protein kinase from Homo sapiens (Human).